A 353-amino-acid polypeptide reads, in one-letter code: UDP-N-acetylglucosamine--N-acetylmuramyl-(pentapeptide) pyrophosphoryl-undecaprenol N-acetylglucosamine transferase (353 aa).

UDP-N-acetyl-alpha-D-glucosamine-binding positions include Thr10–Gly12, Asn124, Ser183, and Gln283.

The protein belongs to the glycosyltransferase 28 family. MurG subfamily.

The protein localises to the cell inner membrane. The enzyme catalyses di-trans,octa-cis-undecaprenyl diphospho-N-acetyl-alpha-D-muramoyl-L-alanyl-D-glutamyl-meso-2,6-diaminopimeloyl-D-alanyl-D-alanine + UDP-N-acetyl-alpha-D-glucosamine = di-trans,octa-cis-undecaprenyl diphospho-[N-acetyl-alpha-D-glucosaminyl-(1-&gt;4)]-N-acetyl-alpha-D-muramoyl-L-alanyl-D-glutamyl-meso-2,6-diaminopimeloyl-D-alanyl-D-alanine + UDP + H(+). It functions in the pathway cell wall biogenesis; peptidoglycan biosynthesis. Cell wall formation. Catalyzes the transfer of a GlcNAc subunit on undecaprenyl-pyrophosphoryl-MurNAc-pentapeptide (lipid intermediate I) to form undecaprenyl-pyrophosphoryl-MurNAc-(pentapeptide)GlcNAc (lipid intermediate II). The chain is UDP-N-acetylglucosamine--N-acetylmuramyl-(pentapeptide) pyrophosphoryl-undecaprenol N-acetylglucosamine transferase from Helicobacter pylori (strain ATCC 700392 / 26695) (Campylobacter pylori).